A 256-amino-acid polypeptide reads, in one-letter code: Hemolymph lipopolysaccharide-binding protein (256 aa).

The signal sequence occupies residues 1–21; the sequence is MMNTRALLPLSVLLMATLCLC. Positions 22 to 33 are excised as a propeptide; the sequence is ELPIPILQRFVR. N56 carries N-linked (GlcNAc...) asparagine glycosylation. Residues 146 to 256 form the C-type lectin domain; sequence IICQQEGGHL…KLPFVCEVEL (111 aa). Disulfide bonds link C148–C252 and C230–C244.

Hemolymph.

Its subcellular location is the secreted. Functionally, participates probably in the elimination of foreign substances invading the insect abdominal cavity, and in trapping intracellular symbionts, when they leak from the mycetomes into the hemolymph. In Periplaneta americana (American cockroach), this protein is Hemolymph lipopolysaccharide-binding protein.